The primary structure comprises 240 residues: Short palate, lung and nasal epithelium carcinoma-associated protein 2B (240 aa).

The N-terminal stretch at 1–19 is a signal peptide; it reads MVQLWKLVLLCGLLAGTSA. Cysteine 163 and cysteine 206 are joined by a disulfide.

Belongs to the BPI/LBP/Plunc superfamily. Plunc family. As to expression, parotid glands.

It localises to the secreted. The protein is Short palate, lung and nasal epithelium carcinoma-associated protein 2B (SPLUNC2B) of Bos taurus (Bovine).